Consider the following 759-residue polypeptide: Rab guanine nucleotide exchange factor SEC2 (759 aa).

Met-1 carries the post-translational modification N-acetylmethionine. A coiled-coil region spans residues 26–164; sequence DKQSHLEEQL…KKVMHSLDNE (139 aa). The residue at position 168 (Thr-168) is a Phosphothreonine. Phosphoserine is present on Ser-171. A required for proper polarized localization of the protein region spans residues 451–508; the sequence is TKNKPKMEIFSSETNAKPGQPTTNIQRAWLQLCKLRCILHWTHIGIWAVDDSISSKIG. Ser-515 is modified (phosphoserine). Positions 538-759 are disordered; the sequence is KRPFSSSSAE…DNFDDAQEQQ (222 aa). Acidic residues predominate over residues 555–576; the sequence is FDFESGDMENEITGESSSDESS. 2 stretches are compositionally biased toward low complexity: residues 577-589 and 597-612; these read SDGS…TADS and LADS…SPES. Basic residues predominate over residues 648 to 664; the sequence is RSIIKKKAPQRKIQKKK. Positions 651-682 form a coiled coil; sequence IKKKAPQRKIQKKKLLQDLDDLEEQFREESAI. Residues 690–703 are compositionally biased toward polar residues; sequence AESNVKQNISSKRA. Residues 704–719 are compositionally biased toward basic and acidic residues; the sequence is SSGDENSKKDNNEKTL. Residues 731 to 744 are compositionally biased toward polar residues; the sequence is EQIGENSPSSGLHA. Positions 732–759 form a coiled coil; the sequence is QIGENSPSSGLHASSSNDDNFDDAQEQQ. Residues 750–759 show a composition bias toward acidic residues; sequence DNFDDAQEQQ.

It belongs to the SEC2 family. As to quaternary structure, interacts with SEC4. Interacts with YPT32, preferentially in its GTP-bound form.

It is found in the bud neck. The protein resides in the bud tip. The protein localises to the cytoplasmic vesicle. It localises to the secretory vesicle. Guanine nucleotide exchange factor for SEC4, catalyzing the dissociation of GDP from SEC4 and also potently promoting binding of GTP. Activation of SEC4 by SEC2 is needed for the directed transport of vesicles to sites of exocytosis. Binds the Rab GTPase YPT32, but does not have exchange activity on YPT32. The polypeptide is Rab guanine nucleotide exchange factor SEC2 (SEC2) (Saccharomyces cerevisiae (strain ATCC 204508 / S288c) (Baker's yeast)).